Consider the following 158-residue polypeptide: Transcription elongation factor GreA (158 aa).

It belongs to the GreA/GreB family.

Necessary for efficient RNA polymerase transcription elongation past template-encoded arresting sites. The arresting sites in DNA have the property of trapping a certain fraction of elongating RNA polymerases that pass through, resulting in locked ternary complexes. Cleavage of the nascent transcript by cleavage factors such as GreA or GreB allows the resumption of elongation from the new 3'terminus. GreA releases sequences of 2 to 3 nucleotides. The chain is Transcription elongation factor GreA from Psychrobacter cryohalolentis (strain ATCC BAA-1226 / DSM 17306 / VKM B-2378 / K5).